The following is a 46-amino-acid chain: Large ribosomal subunit protein bL36 (46 aa).

Belongs to the bacterial ribosomal protein bL36 family.

The chain is Large ribosomal subunit protein bL36 from Klebsiella pneumoniae (strain 342).